Here is a 392-residue protein sequence, read N- to C-terminus: MMAGIVACILLVFVTVITAQPQAVFLEYIQGRMGVLEERIAQWHDQSSRFSGELRDFKNQVLKMLENIEKERDSLRNEMENTNVRVNRLEREVDYIETQNPAPPCVEIDEKLSDHHGAKKKKKEKYQKITDCSDTISQVTAMKILKRFGSSAGLWTKDLAGNSDRIYVFDGAGNDTVYMYPRMKEFTLSSPTRKAAKIRLPFPWIGTGHIVYDGNLYYIRQDNEFQVIKFSLANKTIIDSAVLPIEQQVPVYGLSKFNYIDIVADEEGLWVIYATKENEKNICLAKLDPSSLSIEQMWDTPCPIENAESAFVVCGSLYVVYNTKLPSRSRIQCVFDVSGTISSENVPIVYFPKRYGSHSSMKYNPREKQIYAWDDGYQIIYKLNMKHRDELY.

The signal sequence occupies residues 1–19 (MMAGIVACILLVFVTVITA). Residues 52–100 (GELRDFKNQVLKMLENIEKERDSLRNEMENTNVRVNRLEREVDYIETQN) adopt a coiled-coil conformation. The Olfactomedin-like domain maps to 131 to 387 (DCSDTISQVT…QIIYKLNMKH (257 aa)). Cys132 and Cys314 form a disulfide bridge. N-linked (GlcNAc...) asparagine glycosylation is found at Asn174 and Asn234.

It belongs to the OLFML3 family. In terms of assembly, interacts (via coiled coil domain) with BMP1 and (via olfactomedin-like domain) CHRD.

Its subcellular location is the secreted. In terms of biological role, secreted scaffold protein that plays an essential role in dorsoventral patterning during early development. Stabilizes axial formation by restricting chordin (CHRD) activity on the dorsal side. Acts by facilitating the association between the tolloid protease BMP1 and its substrate chordin (CHRD), leading to enhance chordin (CHRD) degradation by BMP1. The sequence is that of Olfactomedin-like protein 3 (olfml3) from Xenopus laevis (African clawed frog).